The chain runs to 259 residues: uncharacterized protein (259 aa).

Positions Gln110–Thr259 constitute an N-acetyltransferase domain.

May be involved in maturation of the outermost layer of the spore. This is an uncharacterized protein from Bacillus subtilis (strain 168).